A 452-amino-acid polypeptide reads, in one-letter code: CUGBP Elav-like family member 3 (452 aa).

3 RRM domains span residues 7–88 (IKLF…PADS), 94–174 (RKLF…FADT), and 367–445 (CNIF…LKRP).

It belongs to the CELF/BRUNOL family.

It is found in the nucleus. It localises to the cytoplasm. Its function is as follows. RNA-binding protein that may be involved in the regulation of pre-mRNA alternative splicing. This is CUGBP Elav-like family member 3 (celf3) from Danio rerio (Zebrafish).